A 208-amino-acid chain; its full sequence is FMN-dependent NADH:quinone oxidoreductase 4 (208 aa).

Belongs to the azoreductase type 1 family. Homodimer. FMN serves as cofactor.

It carries out the reaction 2 a quinone + NADH + H(+) = 2 a 1,4-benzosemiquinone + NAD(+). It catalyses the reaction N,N-dimethyl-1,4-phenylenediamine + anthranilate + 2 NAD(+) = 2-(4-dimethylaminophenyl)diazenylbenzoate + 2 NADH + 2 H(+). Functionally, quinone reductase that provides resistance to thiol-specific stress caused by electrophilic quinones. Its function is as follows. Also exhibits azoreductase activity. Catalyzes the reductive cleavage of the azo bond in aromatic azo compounds to the corresponding amines. This chain is FMN-dependent NADH:quinone oxidoreductase 4, found in Bacillus cereus (strain ZK / E33L).